A 431-amino-acid polypeptide reads, in one-letter code: Adenylosuccinate lyase (431 aa).

N(6)-(1,2-dicarboxyethyl)-AMP contacts are provided by residues 4 to 5 (RY), 67 to 69 (RHD), and 93 to 94 (TS). H141 functions as the Proton donor/acceptor in the catalytic mechanism. Q212 lines the N(6)-(1,2-dicarboxyethyl)-AMP pocket. S262 functions as the Proton donor/acceptor in the catalytic mechanism. N(6)-(1,2-dicarboxyethyl)-AMP is bound by residues S263, 268–270 (KRN), N276, and 307–311 (SAERI).

It belongs to the lyase 1 family. Adenylosuccinate lyase subfamily. As to quaternary structure, homodimer and homotetramer. Residues from neighboring subunits contribute catalytic and substrate-binding residues to each active site.

It catalyses the reaction N(6)-(1,2-dicarboxyethyl)-AMP = fumarate + AMP. It carries out the reaction (2S)-2-[5-amino-1-(5-phospho-beta-D-ribosyl)imidazole-4-carboxamido]succinate = 5-amino-1-(5-phospho-beta-D-ribosyl)imidazole-4-carboxamide + fumarate. It functions in the pathway purine metabolism; AMP biosynthesis via de novo pathway; AMP from IMP: step 2/2. It participates in purine metabolism; IMP biosynthesis via de novo pathway; 5-amino-1-(5-phospho-D-ribosyl)imidazole-4-carboxamide from 5-amino-1-(5-phospho-D-ribosyl)imidazole-4-carboxylate: step 2/2. Its function is as follows. Catalyzes two reactions in de novo purine nucleotide biosynthesis. Catalyzes the breakdown of 5-aminoimidazole- (N-succinylocarboxamide) ribotide (SAICAR or 2-[5-amino-1-(5-phospho-beta-D-ribosyl)imidazole-4-carboxamido]succinate) to 5-aminoimidazole-4-carboxamide ribotide (AICAR or 5-amino-1-(5-phospho-beta-D-ribosyl)imidazole-4-carboxamide) and fumarate, and of adenylosuccinate (ADS or N(6)-(1,2-dicarboxyethyl)-AMP) to adenosine monophosphate (AMP) and fumarate. In Staphylococcus aureus (strain USA300), this protein is Adenylosuccinate lyase (purB).